A 159-amino-acid chain; its full sequence is Ribosomal RNA large subunit methyltransferase H (159 aa).

S-adenosyl-L-methionine is bound by residues L76, G108, and 127–132 (FSKMTF).

The protein belongs to the RNA methyltransferase RlmH family. In terms of assembly, homodimer.

It localises to the cytoplasm. It carries out the reaction pseudouridine(1915) in 23S rRNA + S-adenosyl-L-methionine = N(3)-methylpseudouridine(1915) in 23S rRNA + S-adenosyl-L-homocysteine + H(+). Its function is as follows. Specifically methylates the pseudouridine at position 1915 (m3Psi1915) in 23S rRNA. This Staphylococcus aureus (strain Mu3 / ATCC 700698) protein is Ribosomal RNA large subunit methyltransferase H.